A 255-amino-acid polypeptide reads, in one-letter code: Myogenic factor 5 (255 aa).

The 52-residue stretch at 83 to 134 folds into the bHLH domain; the sequence is DRRKAATMRERRRLKKVNQAFETLKRCTTTNPNQRLPKVEILRNAIQYIESL. Over residues 221–242 the composition is skewed to low complexity; the sequence is SLPIPDSITPSPTSSTDSLPRS. Positions 221-246 are disordered; the sequence is SLPIPDSITPSPTSSTDSLPRSPDAH.

Efficient DNA binding requires dimerization with another bHLH protein.

The protein resides in the nucleus. Acts as a transcriptional activator that promotes transcription of muscle-specific target genes and plays a role in muscle differentiation. Induces fibroblasts to differentiate into myoblasts. Probable sequence specific DNA-binding protein. The protein is Myogenic factor 5 (myf5) of Xenopus laevis (African clawed frog).